The sequence spans 138 residues: Cysteine desulfuration protein SufE (138 aa).

C51 serves as the catalytic Cysteine persulfide intermediate.

Belongs to the SufE family. In terms of assembly, homodimer. Interacts with SufS.

It localises to the cytoplasm. It participates in cofactor biosynthesis; iron-sulfur cluster biosynthesis. Its function is as follows. Participates in cysteine desulfuration mediated by SufS. Cysteine desulfuration mobilizes sulfur from L-cysteine to yield L-alanine and constitutes an essential step in sulfur metabolism for biosynthesis of a variety of sulfur-containing biomolecules. Functions as a sulfur acceptor for SufS, by mediating the direct transfer of the sulfur atom from the S-sulfanylcysteine of SufS, an intermediate product of cysteine desulfuration process. This is Cysteine desulfuration protein SufE from Salmonella agona (strain SL483).